Consider the following 65-residue polypeptide: Large ribosomal subunit protein bL35 (65 aa).

Over residues 1-15 (MPKMKTKKSAAKRFQ) the composition is skewed to basic residues. The interval 1–26 (MPKMKTKKSAAKRFQVRGSGSIKRGQ) is disordered.

Belongs to the bacterial ribosomal protein bL35 family.

The protein is Large ribosomal subunit protein bL35 of Bordetella avium (strain 197N).